The following is a 271-amino-acid chain: MEELRERVWNGTINVEVVVSDAIVVPNTTLADKSCHIVMLRDAYLGFYLPTVVRKLADTIKVPYESDYRNWWFEYNGEGVPWEYPCGVLFDLLNKKRKKQGNELDDTSLQMWELQLCHGDKYPRGILPLVDGHSQIKDYWRHQWKQACFILNGSAKRIMSLSIPDFENFWVSILSRNRSDFMAVRSKLFSMNKAKSLPVRVWTSNYAVLQPTVPVTDKELSVAELLDSIKLSSDGVKSVIIQGIDVSIEDNIFELYDIFASIDGFLYLVTK.

K145 is covalently cross-linked (Glycyl lysine isopeptide (Lys-Gly) (interchain with G-Cter in ATG12)).

Belongs to the ATG5 family. As to quaternary structure, conjugated with ATG12. Interacts with ATG10. The ATG5-ATG12 conjugate forms a complex with several units of ATG16. The ATG12-ATG5 conjugate also associates with ATG3. In terms of processing, conjugated to ATG12; which is essential for autophagy. Conjugation with ATG12 involves ATG7 as an E1-like activating enzyme and ATG10 as an E2-like conjugating enzyme.

The protein resides in the preautophagosomal structure membrane. Its function is as follows. Involved in cytoplasm to vacuole transport (Cvt) and autophagic vesicle formation. Autophagy is essential for maintenance of amino acid levels and protein synthesis under nitrogen starvation. Required for selective autophagic degradation of the nucleus (nucleophagy). Also required for mitophagy, which eliminates defective or superfluous mitochondria in order to fulfill cellular energy requirements and prevent excess ROS production. Conjugation with ATG12, through a ubiquitin-like conjugating system involving ATG7 as an E1-like activating enzyme and ATG10 as an E2-like conjugating enzyme, is essential for its function. The ATG12-ATG5 conjugate acts as an E3-like enzyme which is required for lipidation of ATG8 and ATG8 association to the vesicle membranes. ATG12-ATG5 rearranges the ATG3 catalytic center and enhances its E2 activity. The chain is Autophagy-related protein 5 from Kluyveromyces marxianus (strain DMKU3-1042 / BCC 29191 / NBRC 104275) (Yeast).